The sequence spans 305 residues: Putative glutamine--fructose-6-phosphate aminotransferase [isomerizing] (305 aa).

C2 functions as the Nucleophile; for GATase activity in the catalytic mechanism. A Glutamine amidotransferase type-2 domain is found at C2–E305.

The catalysed reaction is D-fructose 6-phosphate + L-glutamine = D-glucosamine 6-phosphate + L-glutamate. It functions in the pathway nucleotide-sugar biosynthesis; UDP-N-acetyl-alpha-D-glucosamine biosynthesis; alpha-D-glucosamine 6-phosphate from D-fructose 6-phosphate: step 1/1. In terms of biological role, involved in amino sugar synthesis (formation of chitin, supplies the amino sugars of asparagine-linked oligosaccharides of glycoproteins). The sequence is that of Putative glutamine--fructose-6-phosphate aminotransferase [isomerizing] from Saccharomyces cerevisiae (strain Lalvin EC1118 / Prise de mousse) (Baker's yeast).